The sequence spans 189 residues: Elongation factor P (189 aa).

Residue K34 is modified to N6-(3,6-diaminohexanoyl)-5-hydroxylysine.

Belongs to the elongation factor P family. May be beta-lysylated on the epsilon-amino group of Lys-34 by the combined action of EpmA and EpmB, and then hydroxylated on the C5 position of the same residue by EpmC (if this protein is present). Lysylation is critical for the stimulatory effect of EF-P on peptide-bond formation. The lysylation moiety may extend toward the peptidyltransferase center and stabilize the terminal 3-CCA end of the tRNA. Hydroxylation of the C5 position on Lys-34 may allow additional potential stabilizing hydrogen-bond interactions with the P-tRNA.

The protein resides in the cytoplasm. It functions in the pathway protein biosynthesis; polypeptide chain elongation. Functionally, involved in peptide bond synthesis. Alleviates ribosome stalling that occurs when 3 or more consecutive Pro residues or the sequence PPG is present in a protein, possibly by augmenting the peptidyl transferase activity of the ribosome. Modification of Lys-34 is required for alleviation. This Nitrosococcus oceani (strain ATCC 19707 / BCRC 17464 / JCM 30415 / NCIMB 11848 / C-107) protein is Elongation factor P.